The sequence spans 353 residues: Protein RecA (353 aa).

An ATP-binding site is contributed by 75-82 (GPESSGKT).

This sequence belongs to the RecA family.

The protein resides in the cytoplasm. Functionally, can catalyze the hydrolysis of ATP in the presence of single-stranded DNA, the ATP-dependent uptake of single-stranded DNA by duplex DNA, and the ATP-dependent hybridization of homologous single-stranded DNAs. It interacts with LexA causing its activation and leading to its autocatalytic cleavage. This chain is Protein RecA, found in Cupriavidus necator (Alcaligenes eutrophus).